Consider the following 149-residue polypeptide: Transcriptional repressor NrdR (149 aa).

A zinc finger spans residues 3–34 (CPFCGHAATQVIDTRMSEEGDTVRRRRRCESC). The 91-residue stretch at 49-139 (PAVVKKNGSR…VYRSFEDVSE (91 aa)) folds into the ATP-cone domain.

The protein belongs to the NrdR family. It depends on Zn(2+) as a cofactor.

Functionally, negatively regulates transcription of bacterial ribonucleotide reductase nrd genes and operons by binding to NrdR-boxes. The polypeptide is Transcriptional repressor NrdR (Ralstonia nicotianae (strain ATCC BAA-1114 / GMI1000) (Ralstonia solanacearum)).